A 354-amino-acid chain; its full sequence is DNA polymerase IV (354 aa).

Positions 7-188 constitute a UmuC domain; that stretch reads IIHVDMDCFF…LPLAKIPGVG (182 aa). Positions 11 and 106 each coordinate Mg(2+). E107 is an active-site residue.

The protein belongs to the DNA polymerase type-Y family. As to quaternary structure, monomer. Requires Mg(2+) as cofactor.

It localises to the cytoplasm. It carries out the reaction DNA(n) + a 2'-deoxyribonucleoside 5'-triphosphate = DNA(n+1) + diphosphate. Functionally, poorly processive, error-prone DNA polymerase involved in untargeted mutagenesis. Copies undamaged DNA at stalled replication forks, which arise in vivo from mismatched or misaligned primer ends. These misaligned primers can be extended by PolIV. Exhibits no 3'-5' exonuclease (proofreading) activity. May be involved in translesional synthesis, in conjunction with the beta clamp from PolIII. The chain is DNA polymerase IV from Shigella boydii serotype 18 (strain CDC 3083-94 / BS512).